The sequence spans 244 residues: MDKSELVQKAKLSEQAERYDDMAASMKAVTELGAELSNEERNLLSVAYKNVVGARRSSWRVISSIEQKTEGNDKRQQMAREYREKVETELQDICKDVLDLLDRFLVPNATPPESKVFYLKMKGDYYRYLSEVASGDSKQETVANSQQAYQEAFEISKSEMQPTHPIRLGLALNFSVFYYEILNSPDKACSLAKSAFDEAIAELDTLNEESYKDSTLIMQLLRDNLTLWTSETQGEEADNVEGDN.

M1 is subject to N-acetylmethionine.

This sequence belongs to the 14-3-3 family. In terms of assembly, homodimer, and heterodimer with other family members.

It is found in the cytoplasm. Functionally, adapter protein implicated in the regulation of a large spectrum of both general and specialized signaling pathways. Binds to a large number of partners, usually by recognition of a phosphoserine or phosphothreonine motif. Binding generally results in the modulation of the activity of the binding partner. The polypeptide is 14-3-3 protein beta/alpha-B (ywhab-b) (Xenopus laevis (African clawed frog)).